Here is a 140-residue protein sequence, read N- to C-terminus: Protein PsiE homolog (140 aa).

The next 4 helical transmembrane spans lie at 16-36, 57-77, 85-105, and 110-130; these read IVLQYILNVALICLGVVLSVF, YHLIDSIVVFFLYFEFIVMII, HFPLRYFIYIGITAIVRLIII, and PLDLLLYACAIFVLISALFIA.

Belongs to the PsiE family.

The protein localises to the cell membrane. In Bacillus cereus (strain ATCC 14579 / DSM 31 / CCUG 7414 / JCM 2152 / NBRC 15305 / NCIMB 9373 / NCTC 2599 / NRRL B-3711), this protein is Protein PsiE homolog.